A 2544-amino-acid polypeptide reads, in one-letter code: Highly reducing polyketide synthase pkhB (2544 aa).

Residues 9-438 (SEPIAIIGMS…GTNAHVILES (430 aa)) form the Ketosynthase family 3 (KS3) domain. Active-site for beta-ketoacyl synthase activity residues include cysteine 182, histidine 317, and histidine 358. A malonyl-CoA:ACP transacylase (MAT) domain region spans residues 566 to 876 (VFTGQVFRRS…PYWGCLVRDE (311 aa)). Residues 948–1082 (HELLGMPVAG…GMVGIEESAV (135 aa)) form an N-terminal hotdog fold region. Residues 948 to 1252 (HELLGMPVAG…VELAALGRGS (305 aa)) are dehydratase (DH) domain. One can recognise a PKS/mFAS DH domain in the interval 948 to 1254 (HELLGMPVAG…LAALGRGSSA (307 aa)). Residue histidine 980 is the Proton acceptor; for dehydratase activity of the active site. Residues 1095–1254 (YTRQPNPQDL…LAALGRGSSA (160 aa)) are C-terminal hotdog fold. Catalysis depends on aspartate 1165, which acts as the Proton donor; for dehydratase activity. The segment at 1398–1573 (SSLRQLSALL…FSGLDLEIYD (176 aa)) is methyltransferase (CMet) domain. The interval 1826 to 2142 (GHLGTLAFAE…TGDQMGKVVL (317 aa)) is enoyl reductase (ER) domain. Residues 2169-2356 (ASYLIVGGVG…GVAIDLGPIS (188 aa)) are ketoreductase (KR) domain. The 78-residue stretch at 2462–2539 (EGARLIGAAI…ALAGLVAEKS (78 aa)) folds into the Carrier domain. Serine 2499 is modified (O-(pantetheine 4'-phosphoryl)serine).

Requires pantetheine 4'-phosphate as cofactor.

It functions in the pathway secondary metabolite biosynthesis. In terms of biological role, highly reducing polyketide synthase; part of the pkh gene cluster that mediates the biosynthesis of 2,4-dihydroxy-6-[(3E,5E,7E)-2-oxonona-3,5,7-trienyl]benzaldehyde. The highly reducing polyketide synthase pkhB first produces the (2E,4E,6E)-octa-2,4,6-trienyl strater unit for the non-reducing polyketide synthase pkhA. This octatrienoyl starter is then loaded onto the SAT domain of the NR-PKS pkhA to be condensed with 4 malonyl-CoA units to yield 2,4-dihydroxy-6-[(3E,5E,7E)-2-oxonona-3,5,7-trienyl]benzaldehyde. In Emericella nidulans (strain FGSC A4 / ATCC 38163 / CBS 112.46 / NRRL 194 / M139) (Aspergillus nidulans), this protein is Highly reducing polyketide synthase pkhB.